The following is a 190-amino-acid chain: NADH-quinone oxidoreductase subunit B (190 aa).

[4Fe-4S] cluster contacts are provided by Cys-69, Cys-70, Cys-134, and Cys-164.

This sequence belongs to the complex I 20 kDa subunit family. NDH-1 is composed of 14 different subunits. Subunits NuoB, C, D, E, F, and G constitute the peripheral sector of the complex. The cofactor is [4Fe-4S] cluster.

The protein resides in the cell inner membrane. It catalyses the reaction a quinone + NADH + 5 H(+)(in) = a quinol + NAD(+) + 4 H(+)(out). In terms of biological role, NDH-1 shuttles electrons from NADH, via FMN and iron-sulfur (Fe-S) centers, to quinones in the respiratory chain. Couples the redox reaction to proton translocation (for every two electrons transferred, four hydrogen ions are translocated across the cytoplasmic membrane), and thus conserves the redox energy in a proton gradient. The protein is NADH-quinone oxidoreductase subunit B of Hyphomonas neptunium (strain ATCC 15444).